Reading from the N-terminus, the 210-residue chain is Outer-membrane lipoprotein carrier protein (210 aa).

The first 23 residues, 1–23, serve as a signal peptide directing secretion; that stretch reads MKKRIQKTILTVLFSSLSSIAFA.

Belongs to the LolA family. Monomer.

Its subcellular location is the periplasm. In terms of biological role, participates in the translocation of lipoproteins from the inner membrane to the outer membrane. Only forms a complex with a lipoprotein if the residue after the N-terminal Cys is not an aspartate (The Asp acts as a targeting signal to indicate that the lipoprotein should stay in the inner membrane). The protein is Outer-membrane lipoprotein carrier protein of Haemophilus ducreyi (strain 35000HP / ATCC 700724).